A 504-amino-acid chain; its full sequence is Anaerobic nitric oxide reductase transcription regulator NorR (504 aa).

Aspartate 57 bears the 4-aspartylphosphate mark. Residues methionine 187–valine 416 form the Sigma-54 factor interaction domain. Residues glycine 215–glutamate 222 and alanine 278–glutamate 287 contribute to the ATP site. Positions tryptophan 479–lysine 498 form a DNA-binding region, H-T-H motif.

Its pathway is nitrogen metabolism; nitric oxide reduction. Functionally, required for the expression of anaerobic nitric oxide (NO) reductase, acts as a transcriptional activator for at least the norVW operon. Activation also requires sigma-54. The protein is Anaerobic nitric oxide reductase transcription regulator NorR of Escherichia coli O157:H7.